Consider the following 338-residue polypeptide: Phenylalanine--tRNA ligase alpha subunit (338 aa).

E252 is a binding site for Mg(2+).

Belongs to the class-II aminoacyl-tRNA synthetase family. Phe-tRNA synthetase alpha subunit type 1 subfamily. As to quaternary structure, tetramer of two alpha and two beta subunits. Mg(2+) is required as a cofactor.

The protein resides in the cytoplasm. The enzyme catalyses tRNA(Phe) + L-phenylalanine + ATP = L-phenylalanyl-tRNA(Phe) + AMP + diphosphate + H(+). In Pseudomonas aeruginosa (strain UCBPP-PA14), this protein is Phenylalanine--tRNA ligase alpha subunit.